A 328-amino-acid chain; its full sequence is Bcl-2/adenovirus E1B 19 kDa-interacting protein 2-like protein (328 aa).

Positions 1 to 22 are enriched in basic and acidic residues; the sequence is MKLGELELREEWQDEEFPRLLP. Residues 1–116 form a disordered region; the sequence is MKLGELELRE…DSGHEFEWED (116 aa). The segment covering 36–45 has biased composition (polar residues); sequence RGSQAGTPSS. Positions 76-89 are enriched in low complexity; sequence ASPTRSASSSSAGS. The span at 92–105 shows a compositional bias: acidic residues; it reads LEVDELETPSDSEQ. Basic and acidic residues predominate over residues 107 to 116; it reads DSGHEFEWED. In terms of domain architecture, CRAL-TRIO spans 162–323; the sequence is DMTIIEPYKK…VVRQLDRDLH (162 aa).

As to quaternary structure, homodimer. Interacts with BCL2, ARHGAP1, MIF and GFER.

Functionally, may be a bridge molecule between BCL2 and ARHGAP1/CDC42 in promoting cell death. In Mus musculus (Mouse), this protein is Bcl-2/adenovirus E1B 19 kDa-interacting protein 2-like protein (Bnipl).